We begin with the raw amino-acid sequence, 429 residues long: Histidine--tRNA ligase (429 aa).

The protein belongs to the class-II aminoacyl-tRNA synthetase family. Homodimer.

Its subcellular location is the cytoplasm. The catalysed reaction is tRNA(His) + L-histidine + ATP = L-histidyl-tRNA(His) + AMP + diphosphate + H(+). The chain is Histidine--tRNA ligase from Streptococcus pneumoniae (strain P1031).